A 156-amino-acid chain; its full sequence is Peptide deformylase 1 (156 aa).

Residues C90 and H132 each contribute to the Fe cation site. E133 is an active-site residue. Position 136 (H136) interacts with Fe cation.

Belongs to the polypeptide deformylase family. The cofactor is Fe(2+).

It catalyses the reaction N-terminal N-formyl-L-methionyl-[peptide] + H2O = N-terminal L-methionyl-[peptide] + formate. Its function is as follows. Removes the formyl group from the N-terminal Met of newly synthesized proteins. Requires at least a dipeptide for an efficient rate of reaction. N-terminal L-methionine is a prerequisite for activity but the enzyme has broad specificity at other positions. This is Peptide deformylase 1 from Bacillus cereus (strain ATCC 14579 / DSM 31 / CCUG 7414 / JCM 2152 / NBRC 15305 / NCIMB 9373 / NCTC 2599 / NRRL B-3711).